Consider the following 204-residue polypeptide: Peptidyl-prolyl cis-trans isomerase CYP20-1 (204 aa).

The signal sequence occupies residues 1–23; sequence MASSVTLLLWSLLLLGTLSAIQA. The region spanning 38-201 is the PPIase cyclophilin-type domain; that stretch reads YFDVEIDGKA…SKVVIVDSGE (164 aa).

It belongs to the cyclophilin-type PPIase family. As to quaternary structure, interacts with the PP2A A subunit PP2AA1/RCN1. In terms of tissue distribution, ubiquitous, mostly in aerial organs. Higher levels in leaf and buds, and lower levels in seedlings.

The protein localises to the endoplasmic reticulum. It is found in the secreted. The catalysed reaction is [protein]-peptidylproline (omega=180) = [protein]-peptidylproline (omega=0). With respect to regulation, binds cyclosporin A (CsA). CsA mediates some of its effects via an inhibitory action on PPIase. Its function is as follows. PPIases accelerate the folding of proteins. It catalyzes the cis-trans isomerization of proline imidic peptide bonds in oligopeptides. Seems to be involved in root development. This chain is Peptidyl-prolyl cis-trans isomerase CYP20-1 (CYP20-1), found in Arabidopsis thaliana (Mouse-ear cress).